Reading from the N-terminus, the 213-residue chain is Pyridoxine/pyridoxamine 5'-phosphate oxidase (213 aa).

Residues arginine 60–lysine 65, tyrosine 75–serine 76, lysine 82, and glutamine 104 contribute to the FMN site. Substrate is bound at residue lysine 65. 2 residues coordinate substrate: tyrosine 122 and arginine 126. FMN is bound by residues glutamine 139–serine 140 and tryptophan 184. Arginine 190–histidine 192 is a binding site for substrate. Arginine 194 contributes to the FMN binding site.

The protein belongs to the pyridoxamine 5'-phosphate oxidase family. In terms of assembly, homodimer. It depends on FMN as a cofactor.

It carries out the reaction pyridoxamine 5'-phosphate + O2 + H2O = pyridoxal 5'-phosphate + H2O2 + NH4(+). The enzyme catalyses pyridoxine 5'-phosphate + O2 = pyridoxal 5'-phosphate + H2O2. It functions in the pathway cofactor metabolism; pyridoxal 5'-phosphate salvage; pyridoxal 5'-phosphate from pyridoxamine 5'-phosphate: step 1/1. Its pathway is cofactor metabolism; pyridoxal 5'-phosphate salvage; pyridoxal 5'-phosphate from pyridoxine 5'-phosphate: step 1/1. Catalyzes the oxidation of either pyridoxine 5'-phosphate (PNP) or pyridoxamine 5'-phosphate (PMP) into pyridoxal 5'-phosphate (PLP). This Nitrobacter hamburgensis (strain DSM 10229 / NCIMB 13809 / X14) protein is Pyridoxine/pyridoxamine 5'-phosphate oxidase.